The following is a 125-amino-acid chain: MATFKLVISDPKSGIAKQVEITGAETEKLIGKRIGDQIPAKELNINLNELFGKEFPEDVKLEIRGGTDKDGFPMRPDIHGPRRVRVLLSKGPGFRPKEKGERRKKTVRGNTISPEIVQVNVKLVY.

The interval Lys90–Gly109 is disordered.

This sequence belongs to the eukaryotic ribosomal protein eS6 family. As to quaternary structure, part of the 30S ribosomal subunit.

In Pyrococcus furiosus (strain ATCC 43587 / DSM 3638 / JCM 8422 / Vc1), this protein is Small ribosomal subunit protein eS6.